We begin with the raw amino-acid sequence, 203 residues long: Small ribosomal subunit protein uS4 (203 aa).

The region spanning 93 to 153 is the S4 RNA-binding domain; it reads RRFDNVVFRA…PKSKNMSAVS (61 aa).

It belongs to the universal ribosomal protein uS4 family. Part of the 30S ribosomal subunit. Contacts protein S5. The interaction surface between S4 and S5 is involved in control of translational fidelity.

In terms of biological role, one of the primary rRNA binding proteins, it binds directly to 16S rRNA where it nucleates assembly of the body of the 30S subunit. Functionally, with S5 and S12 plays an important role in translational accuracy. The protein is Small ribosomal subunit protein uS4 of Chlorobium phaeovibrioides (strain DSM 265 / 1930) (Prosthecochloris vibrioformis (strain DSM 265)).